The primary structure comprises 143 residues: Transcription antitermination protein NusB (143 aa).

It belongs to the NusB family.

Its function is as follows. Involved in transcription antitermination. Required for transcription of ribosomal RNA (rRNA) genes. Binds specifically to the boxA antiterminator sequence of the ribosomal RNA (rrn) operons. The polypeptide is Transcription antitermination protein NusB (Clostridium botulinum (strain ATCC 19397 / Type A)).